Here is a 79-residue protein sequence, read N- to C-terminus: MTLRNPHLGIDNDELMRRVEALINASKNRYRITVQVANRAKRRRYDDPNDVEEGWMKPIRRAIIEMSDELTEPEIIGDE.

This sequence belongs to the RNA polymerase subunit omega family. In terms of assembly, in cyanobacteria the RNAP catalytic core is composed of 2 alpha, 1 beta, 1 beta', 1 gamma and 1 omega subunit. When a sigma factor is associated with the core the holoenzyme is formed, which can initiate transcription.

It carries out the reaction RNA(n) + a ribonucleoside 5'-triphosphate = RNA(n+1) + diphosphate. Its function is as follows. Promotes RNA polymerase assembly. Latches the N- and C-terminal regions of the beta' subunit thereby facilitating its interaction with the beta and alpha subunits. The protein is DNA-directed RNA polymerase subunit omega of Synechococcus sp. (strain JA-3-3Ab) (Cyanobacteria bacterium Yellowstone A-Prime).